Consider the following 104-residue polypeptide: Large ribosomal subunit protein uL24 (104 aa).

This sequence belongs to the universal ribosomal protein uL24 family. As to quaternary structure, part of the 50S ribosomal subunit.

Its function is as follows. One of two assembly initiator proteins, it binds directly to the 5'-end of the 23S rRNA, where it nucleates assembly of the 50S subunit. Functionally, one of the proteins that surrounds the polypeptide exit tunnel on the outside of the subunit. The protein is Large ribosomal subunit protein uL24 of Pseudomonas fluorescens (strain Pf0-1).